The following is a 147-amino-acid chain: Echinoidin (147 aa).

A C-type lectin domain is found at 1–143; it reads GCCPTFWTSF…STRHYLICKL (143 aa). 3 cysteine pairs are disulfide-bonded: Cys-3-Cys-14, Cys-31-Cys-141, and Cys-116-Cys-132. The O-linked (Hex) serine glycan is linked to Ser-38. Residues 39–41 carry the Cell attachment site motif; the sequence is RGD.

Homodimer; disulfide-linked. Post-translationally, the identity of the saccharide is not reported in PubMed:3571253, and it is unlikely to be N-acetylgalactosamine. The sugar attached to Ser-38 is represented simply as Hex. Coelemic fluid.

It localises to the secreted. Functionally, role in the defense system of the organism against microorganisms. This lectin is specific for Gal-GalNAc. The polypeptide is Echinoidin (Heliocidaris crassispina (Sea urchin)).